An 861-amino-acid chain; its full sequence is Replication factor C subunit 1 (861 aa).

The interval 1–103 (MVNISDFFGK…SSKSSDSASN (103 aa)) is disordered. Residues 16 to 28 (RSSTSRPTRQVGS) are compositionally biased toward polar residues. T38 carries the phosphothreonine modification. S40 bears the Phosphoserine mark. T63 carries the post-translational modification Phosphothreonine. Residues 153–243 (GKPNCLLGLT…PAEGGDGEAA (91 aa)) enclose the BRCT domain. ATP contacts are provided by residues T299, C311, 353 to 361 (GPPGIGKTT), and N456. Positions 788–861 (STIGGGGVGT…GGSKKRKTKA (74 aa)) are disordered. Residues 803–823 (DFEDVVDADDNPVPADDEETQ) are compositionally biased toward acidic residues. 2 short sequence motifs (nuclear localization signal) span residues 830-834 (KKDKL) and 855-860 (KKRKTK). The segment covering 836–861 (KQKAKPTKRKTATSKPGGSKKRKTKA) has biased composition (basic residues).

It belongs to the activator 1 large subunit family. Replication factor C (RFC) is a heteropentamer of subunits RFC1, RFC2, RFC3, RFC4 and RFC5 and forms a complex with POL30/PCNA in the presence of ATP. Interacts with ECO1 and POL30/PCNA.

It localises to the nucleus. Component of the ATP-dependent clamp loader RFC complex for the POL30/PCNA homotrimer DNA clamp. During a clamp loading circle, the RFC:clamp complex binds to DNA and the recognition of the double-stranded/single-stranded junction stimulates ATP hydrolysis by RFC. The complex presumably provides bipartite ATP sites in which one subunit supplies a catalytic site for hydrolysis of ATP bound to the neighboring subunit. Dissociation of RFC from the clamp leaves the clamp encircling DNA. Replication factor C (RFC or activator 1) complex acts during elongation of primed DNA templates by DNA polymerase delta and epsilon. RFC has an essential but redundant activity in sister chromatid cohesion establishment. The protein is Replication factor C subunit 1 (RFC1) of Saccharomyces cerevisiae (strain ATCC 204508 / S288c) (Baker's yeast).